The sequence spans 383 residues: Queuine tRNA-ribosyltransferase (383 aa).

Asp89 serves as the catalytic Proton acceptor. Substrate contacts are provided by residues 89 to 93 (DSGGF), Asp143, Gln187, and Gly214. Residues 245–251 (GVGDLID) are RNA binding. The active-site Nucleophile is the Asp264. An RNA binding; important for wobble base 34 recognition region spans residues 269-273 (TRNAR). Positions 302, 304, 307, and 333 each coordinate Zn(2+).

Belongs to the queuine tRNA-ribosyltransferase family. As to quaternary structure, homodimer. Within each dimer, one monomer is responsible for RNA recognition and catalysis, while the other monomer binds to the replacement base PreQ1. The cofactor is Zn(2+).

The enzyme catalyses 7-aminomethyl-7-carbaguanine + guanosine(34) in tRNA = 7-aminomethyl-7-carbaguanosine(34) in tRNA + guanine. The protein operates within tRNA modification; tRNA-queuosine biosynthesis. Functionally, catalyzes the base-exchange of a guanine (G) residue with the queuine precursor 7-aminomethyl-7-deazaguanine (PreQ1) at position 34 (anticodon wobble position) in tRNAs with GU(N) anticodons (tRNA-Asp, -Asn, -His and -Tyr). Catalysis occurs through a double-displacement mechanism. The nucleophile active site attacks the C1' of nucleotide 34 to detach the guanine base from the RNA, forming a covalent enzyme-RNA intermediate. The proton acceptor active site deprotonates the incoming PreQ1, allowing a nucleophilic attack on the C1' of the ribose to form the product. After dissociation, two additional enzymatic reactions on the tRNA convert PreQ1 to queuine (Q), resulting in the hypermodified nucleoside queuosine (7-(((4,5-cis-dihydroxy-2-cyclopenten-1-yl)amino)methyl)-7-deazaguanosine). In Thermodesulfovibrio yellowstonii (strain ATCC 51303 / DSM 11347 / YP87), this protein is Queuine tRNA-ribosyltransferase.